The chain runs to 360 residues: Probable CCR4-associated factor 1 homolog 1 (360 aa).

Residues D37, E39, D155, and D226 each contribute to the a divalent metal cation site.

It belongs to the CAF1 family. In terms of assembly, component of the CCR4-NOT complex, at least composed of CRR4 and CAF1 proteins. It depends on a divalent metal cation as a cofactor.

It localises to the nucleus. Its subcellular location is the cytoplasm. It catalyses the reaction Exonucleolytic cleavage of poly(A) to 5'-AMP.. Ubiquitous transcription factor required for a diverse set of processes. It is a component of the CCR4 complex involved in the control of gene expression. The protein is Probable CCR4-associated factor 1 homolog 1 (CAF1-1) of Arabidopsis thaliana (Mouse-ear cress).